A 317-amino-acid polypeptide reads, in one-letter code: Retinol dehydrogenase 16 (317 aa).

Residue 33 to 57 coordinates NAD(+); sequence FITGCDSGFGNLLARQLDRRGMRVL. Substrate is bound at residue serine 164. The active-site Proton acceptor is the tyrosine 176. A helical transmembrane segment spans residues 289–308; that stretch reads FFYLPMSYLPTFLVDALFYW.

Belongs to the short-chain dehydrogenases/reductases (SDR) family. As to quaternary structure, homodimer. In terms of processing, not N-glycosylated. In terms of tissue distribution, liver &gt; kidney &gt; brain &gt; lung &gt; testis.

The protein localises to the microsome membrane. The protein resides in the endoplasmic reticulum membrane. The enzyme catalyses all-trans-retinol--[retinol-binding protein] + NAD(+) = all-trans-retinal--[retinol-binding protein] + NADH + H(+). It carries out the reaction all-trans-retinol + NAD(+) = all-trans-retinal + NADH + H(+). It catalyses the reaction 13-cis-retinol + NAD(+) = 13-cis-retinal + NADH + H(+). The catalysed reaction is 11-cis-retinol + NAD(+) = 11-cis-retinal + NADH + H(+). The enzyme catalyses 9-cis-retinol + NAD(+) = 9-cis-retinal + NADH + H(+). It carries out the reaction 5alpha-androstane-3alpha,17beta-diol + NAD(+) = 17beta-hydroxy-5alpha-androstan-3-one + NADH + H(+). It catalyses the reaction androsterone + NAD(+) = 5alpha-androstan-3,17-dione + NADH + H(+). Its pathway is cofactor metabolism; retinol metabolism. Oxidoreductase with a preference for NAD. Oxidizes all-trans-retinol, 9-cis-retinol, 11-cis-retinol and 13-cis-retinol to the corresponding aldehydes. Has higher activity towards CRBP-bound retinol than with free retinol. Oxidizes 3-alpha-hydroxysteroids. Oxidizes androstanediol and androsterone to dihydrotestosterone and androstanedione. Can also catalyze the reverse reaction. The sequence is that of Retinol dehydrogenase 16 from Rattus norvegicus (Rat).